Here is a 421-residue protein sequence, read N- to C-terminus: Replication factor C large subunit (421 aa).

Residue 63-70 (GPPGIGKT) coordinates ATP.

It belongs to the activator 1 small subunits family. RfcL subfamily. In terms of assembly, heteromultimer composed of small subunits (RfcS) and large subunits (RfcL).

Its function is as follows. Part of the RFC clamp loader complex which loads the PCNA sliding clamp onto DNA. This is Replication factor C large subunit from Pyrobaculum calidifontis (strain DSM 21063 / JCM 11548 / VA1).